Consider the following 253-residue polypeptide: uncharacterized protein (253 aa).

Positions 211-235 (DEPEPAQPTLTVPSAQPVSNRRGKP) are disordered. Over residues 218–229 (PTLTVPSAQPVS) the composition is skewed to polar residues.

This is an uncharacterized protein from Mycobacterium tuberculosis (strain CDC 1551 / Oshkosh).